We begin with the raw amino-acid sequence, 228 residues long: Uracil-DNA glycosylase (228 aa).

Catalysis depends on aspartate 64, which acts as the Proton acceptor.

Belongs to the uracil-DNA glycosylase (UDG) superfamily. UNG family.

It localises to the cytoplasm. The enzyme catalyses Hydrolyzes single-stranded DNA or mismatched double-stranded DNA and polynucleotides, releasing free uracil.. In terms of biological role, excises uracil residues from the DNA which can arise as a result of misincorporation of dUMP residues by DNA polymerase or due to deamination of cytosine. This chain is Uracil-DNA glycosylase, found in Yersinia pseudotuberculosis serotype O:1b (strain IP 31758).